A 215-amino-acid chain; its full sequence is Wtf element wtf7 (215 aa).

Positions 1-21 (MSGSYAPIEDSADELSVHSGN) are disordered. 3 consecutive transmembrane segments (helical) span residues 119 to 139 (LAQS…CLFF), 149 to 169 (LMGW…SFIL), and 189 to 209 (LILF…YALY).

The protein belongs to the WTF family.

The protein localises to the spore membrane. Functionally, may act in meiotic drive. In Schizosaccharomyces pombe (strain 972 / ATCC 24843) (Fission yeast), this protein is Wtf element wtf7.